Here is a 326-residue protein sequence, read N- to C-terminus: uncharacterized protein (326 aa).

Residues 15-76 (VRIEKFCLKL…IEPYLHNHSE (62 aa)) form the S4 RNA-binding domain. Asp147 is an active-site residue.

This sequence belongs to the pseudouridine synthase RluA family.

It carries out the reaction a uridine in RNA = a pseudouridine in RNA. This is an uncharacterized protein from Mycoplasma pneumoniae (strain ATCC 29342 / M129 / Subtype 1) (Mycoplasmoides pneumoniae).